A 61-amino-acid chain; its full sequence is Metallothionein-1B (61 aa).

A beta region spans residues 1–29; it reads MDPNCSCVAGESCTCAGSCKCKQCRCASC. A divalent metal cation-binding residues include Cys-5, Cys-7, Cys-13, Cys-15, Cys-19, Cys-21, Cys-24, Cys-26, Cys-29, Cys-33, Cys-34, Cys-36, Cys-37, Cys-41, Cys-44, Cys-48, Cys-50, Cys-57, Cys-59, and Cys-60. Residues 30–61 form an alpha region; that stretch reads KKSCCSCCPVGCAKCAQGCVCKGASDKCSCCA.

It belongs to the metallothionein superfamily. Type 1 family.

In terms of biological role, metallothioneins have a high content of cysteine residues that bind various heavy metals; these proteins are transcriptionally regulated by both heavy metals and glucocorticoids. This Equus caballus (Horse) protein is Metallothionein-1B.